A 373-amino-acid polypeptide reads, in one-letter code: Glutamate 5-kinase (373 aa).

K15 serves as a coordination point for ATP. Substrate is bound by residues S55, D142, and N154. Residues T174–D175 and T216–K222 contribute to the ATP site. Positions A281–R359 constitute a PUA domain.

It belongs to the glutamate 5-kinase family.

Its subcellular location is the cytoplasm. The enzyme catalyses L-glutamate + ATP = L-glutamyl 5-phosphate + ADP. Its pathway is amino-acid biosynthesis; L-proline biosynthesis; L-glutamate 5-semialdehyde from L-glutamate: step 1/2. Functionally, catalyzes the transfer of a phosphate group to glutamate to form L-glutamate 5-phosphate. The sequence is that of Glutamate 5-kinase from Citrifermentans bemidjiense (strain ATCC BAA-1014 / DSM 16622 / JCM 12645 / Bem) (Geobacter bemidjiensis).